The following is a 269-amino-acid chain: 4-hydroxy-4-methyl-2-oxoglutarate aldolase cghB (269 aa).

The Proton acceptor role is filled by histidine 48. Glutamate 155 and aspartate 181 together coordinate a divalent metal cation. Substrate is bound at residue aspartate 181.

This sequence belongs to the HpcH/HpaI aldolase family. As to quaternary structure, homohexamer; trimer of dimers. Co(2+) is required as a cofactor. Mn(2+) serves as cofactor. Requires Zn(2+) as cofactor. The cofactor is Fe(2+). It depends on Mg(2+) as a cofactor.

It carries out the reaction 4-hydroxy-4-methyl-2-oxoglutarate = 2 pyruvate. It functions in the pathway secondary metabolite biosynthesis. In terms of biological role, 4-hydroxy-4-methyl-2-oxoglutarate aldolase; part of the gene cluster that mediates the biosynthesis of the tetramic acid Sch210972, a potential anti-HIV fungal natural product that contains a decalin core. The PKS module of cghG together with the enoylreductase cghC catalyze the formation of the polyketide unit which is then conjugated to 4-hydroxyl-4-methyl glutamate (HMG) by the condensation domain of the cghG NRPS module. One unique structural feature of Sch210972 is the tetramic acid motif proposed to be derived from the non-proteinogenic amino acid HMG, by a Dieckmann-type condensation catalyzed by the reductase domain of cghG. The aldolase cghB catalyzes the aldol condensation of 2 molecules of pyruvic acid to yield the intermediate 4-hydroxyl-4-methyl-2-oxoglutarate (HMOG), which can then be stereoselectively transaminated by an unidentified enzyme to form HMG. The Diels-Alderase cghA then uses the Dieckmann product released by cghG as substrate and catalyzes the Diels-Alder cycloaddition to form the decalin ring of Sch210972. CghA also suppresses the nonenzymatic formation of the alternative stereoisomer. This chain is 4-hydroxy-4-methyl-2-oxoglutarate aldolase cghB, found in Chaetomium globosum (strain ATCC 6205 / CBS 148.51 / DSM 1962 / NBRC 6347 / NRRL 1970) (Soil fungus).